Reading from the N-terminus, the 267-residue chain is Undecaprenyl-diphosphatase (267 aa).

The next 8 helical transmembrane spans lie at 1 to 21 (MSYF…FLPI), 39 to 59 (QGLA…VIYF), 83 to 103 (AKLA…GLLM), 111 to 131 (LRSA…LWWV), 144 to 164 (TGWK…IPGT), 189 to 209 (FLMS…KLVT), 218 to 238 (FLLT…HFFL), and 245 to 265 (GMTP…AFLL).

The protein belongs to the UppP family.

It is found in the cell inner membrane. The catalysed reaction is di-trans,octa-cis-undecaprenyl diphosphate + H2O = di-trans,octa-cis-undecaprenyl phosphate + phosphate + H(+). Functionally, catalyzes the dephosphorylation of undecaprenyl diphosphate (UPP). Confers resistance to bacitracin. This Vibrio parahaemolyticus serotype O3:K6 (strain RIMD 2210633) protein is Undecaprenyl-diphosphatase.